A 55-amino-acid chain; its full sequence is Large ribosomal subunit protein bL33 (55 aa).

The protein belongs to the bacterial ribosomal protein bL33 family.

The protein is Large ribosomal subunit protein bL33 of Methylobacterium radiotolerans (strain ATCC 27329 / DSM 1819 / JCM 2831 / NBRC 15690 / NCIMB 10815 / 0-1).